The chain runs to 200 residues: Pyridoxal 5'-phosphate synthase subunit PdxT (200 aa).

52-54 (GES) provides a ligand contact to L-glutamine. Residue Cys84 is the Nucleophile of the active site. L-glutamine is bound by residues Arg116 and 145–146 (IR). Active-site charge relay system residues include His181 and Glu183.

It belongs to the glutaminase PdxT/SNO family. In the presence of PdxS, forms a dodecamer of heterodimers. Only shows activity in the heterodimer.

It carries out the reaction aldehydo-D-ribose 5-phosphate + D-glyceraldehyde 3-phosphate + L-glutamine = pyridoxal 5'-phosphate + L-glutamate + phosphate + 3 H2O + H(+). The enzyme catalyses L-glutamine + H2O = L-glutamate + NH4(+). It participates in cofactor biosynthesis; pyridoxal 5'-phosphate biosynthesis. In terms of biological role, catalyzes the hydrolysis of glutamine to glutamate and ammonia as part of the biosynthesis of pyridoxal 5'-phosphate. The resulting ammonia molecule is channeled to the active site of PdxS. This is Pyridoxal 5'-phosphate synthase subunit PdxT from Saccharolobus solfataricus (strain ATCC 35092 / DSM 1617 / JCM 11322 / P2) (Sulfolobus solfataricus).